A 122-amino-acid chain; its full sequence is MKVLIISAVLFITIFSNISAEIEDDFLEDESFEAEDIIPFFENEQARSCIPKHEECTNDKHNCCRKGLFKLKCQCSTFDDESGQPTERCACGRPMGHQAIETGLNIFRGLFKGKKKNKKTKG.

Residues 1-20 (MKVLIISAVLFITIFSNISA) form the signal peptide. Positions 21-47 (EIEDDFLEDESFEAEDIIPFFENEQAR) are excised as a propeptide. Disulfide bonds link Cys-49–Cys-64, Cys-56–Cys-73, Cys-63–Cys-91, and Cys-75–Cys-89. The predicted alpha-helix stretch occupies residues 99 to 112 (AIETGLNIFRGLFK). An Arginine amide; in CSTX-2a modification is found at Arg-108. Position 121 is a lysine amide; in omega-ctenitoxin-Cs1a (Lys-121).

The protein belongs to the neurotoxin 19 (CSTX) family. 04 (U1-Lctx) subfamily. In terms of assembly, monomer. Interacts with CSTX-13 (AC P83919) (Kd=430 nM), but does not interact with CSTX-9 (AC P58604). As to expression, expressed by the venom gland.

The protein localises to the secreted. The protein resides in the target cell membrane. Spider venom toxin that shows calcium channel blocking activity and exhibits cytolytic activity by affecting the outer leaflet curvature and/or pore formation across the membrane. It blocks L-type calcium channels (Cav1/CACNA1) in mammalian neurons at nanomolar concentrations. Furthermore, it produces a slow voltage-independent block of mid/low and high voltage-activated calcium channels in cockroach neurons. Potassium ions, histamine, M-ctenitoxin-Cs1a (AC P83619), CSTX-9 (AC P58604), and CSTX-13 (AC P83919) synergistically increase the insecticidal activity of this toxin. In vivo, it causes paralysis in blow flies and provokes death in drosophila. Its function is as follows. Blocks voltage-activated calcium channels (Cav). Does not induce cell membrane permeability increase when tested on Xenopus oocytes. No alpha-helical structures are detectable. Is 7-fold less neurotoxic than omega-ctenitoxin-Cs1a on drosophila flies. In terms of biological role, blocks voltage-activated calcium channels (Cav). Is 190-fold less neurotoxic than omega-ctenitoxin-Cs1a on drosophila flies. The protein is Toxin CSTX-1 of Cupiennius salei (American wandering spider).